The chain runs to 169 residues: NADH-quinone oxidoreductase subunit I (169 aa).

4Fe-4S ferredoxin-type domains lie at 61 to 90 and 100 to 129; these read RKYKNGEERCIACKLCEAICPAQAITIEAQ and VRYDIDMTKCIYCGFCQEACPVDAIVEGPN. Residues Cys-70, Cys-73, Cys-76, Cys-80, Cys-109, Cys-112, Cys-115, and Cys-119 each coordinate [4Fe-4S] cluster.

It belongs to the complex I 23 kDa subunit family. As to quaternary structure, NDH-1 is composed of 14 different subunits. Subunits NuoA, H, J, K, L, M, N constitute the membrane sector of the complex. [4Fe-4S] cluster serves as cofactor.

It is found in the cell inner membrane. The enzyme catalyses a quinone + NADH + 5 H(+)(in) = a quinol + NAD(+) + 4 H(+)(out). Functionally, NDH-1 shuttles electrons from NADH, via FMN and iron-sulfur (Fe-S) centers, to quinones in the respiratory chain. The immediate electron acceptor for the enzyme in this species is believed to be ubiquinone. Couples the redox reaction to proton translocation (for every two electrons transferred, four hydrogen ions are translocated across the cytoplasmic membrane), and thus conserves the redox energy in a proton gradient. In Ehrlichia chaffeensis (strain ATCC CRL-10679 / Arkansas), this protein is NADH-quinone oxidoreductase subunit I.